We begin with the raw amino-acid sequence, 365 residues long: Outer capsid protein sigma-3 (365 aa).

The CCHC-type zinc finger occupies 51–73 (CMHCLGVVGSLQRKLKHLPHHRC).

Belongs to the orthoreovirus sigma-3 protein family. In terms of assembly, heterohexamer of three sigma-3 and three Mu-1 proteins. The RNA-binding form is probably a homodimer. Post-translationally, cleaved during virus the endosomal proteolytic disassembly of the outer capsid.

The protein localises to the virion. Functionally, stimulates translation by blocking the activation of the dsRNA-dependent protein kinase EIF2AK2/PKR, thereby inhibiting the host interferon response. Sigma3 prevents the activation of EIF2AK2 by competing with the kinase for dsRNA-binding. In terms of biological role, the viral outer shell polypeptides, of which sigma-3 is one, impose structural constraints that prevent elongation of nascent transcripts by the RNA-dependent RNA polymerase lambda-3. This is Outer capsid protein sigma-3 (S4) from Mammalia (T1L).